Consider the following 842-residue polypeptide: MRVRGMQRNWQTLGNWGILFLGILIICSNADKLWVTVYYGVPVWKEATPTLFCASDAKAYEKEVHNVWATHACVPTDPNPQEVEMENVTENFNMWKNNMVEQMHTDIISLWDESLKPCVELTPLCVTLNCTDYKGTNSTNNATSTVVSPAEIKNCSFNITTEIKDKKKKESALFYRLDVLPLNGEGNNSSTEYRLINCNTSTITQTCPKVTFEPIPIHYCAPAGFAILKCKDKRFNGTGPCKNVSTVQCTHGIKPVVSTQLLLNGSLAEEEIIIRSENITDNTKNIIVQLNETVQINCTRPNNNTRKSIHMGPGKAFYTTGDIIGDIRQAHCNISGEKWNMTLSRVKEKLKEHFKNGTITFKPPNPGGDPEILTHMFNCAGEFFYCNTTKLFNETGENGTITLPCRIKQIINMWQKVGKAIYAPPIAGSINCSSNITGMILTRDGGNNTHNETFRPGGGDMRDNWRSELYKYKVVQIEPLGIAPTRARRRVVQREKRAVGLGAVFFGFLGAAGSTMGAASITLTVQARQLLSGIVQQQSNLLRAIEAQQHLLQLTVWGIKQLRARILAVERYLKDQQLLGIWGCSGKLICTTNVPWNSSWSNKSWEEIWNNMTWMEWEKEIGNYSDTIYKLIEESQTQQEKNEQDLLALDKWASLWNWFDITKWLWYIKIFIMIIGGLIGLRIAFAVLSVVNRVRQGYSPLSFQTLIPTSRGADRPEGIEEEGGEQDKNRSVRLVSGFLALAWDDLRNLCLFSYRQLRNLILIVTRILERGLRGGWEALKYLWNLVQYWSQELKNSAISLLNTTAIAVAGGTDRIIEIGQRAFRALLHIPRRIRQGLERALL.

Residues 1-31 (MRVRGMQRNWQTLGNWGILFLGILIICSNAD) form the signal peptide. The Extracellular portion of the chain corresponds to 32–670 (KLWVTVYYGV…ITKWLWYIKI (639 aa)). C53 and C73 form a disulfide bridge. N-linked (GlcNAc...) asparagine; by host glycosylation is found at N87, N129, N137, N141, N154, N158, N187, N188, N199, N236, N243, N264, N278, N291, N297, N303, N333, N340, and N356. Intrachain disulfides connect C118–C207, C125–C198, C130–C155, C220–C249, and C230–C241. Residues 130-154 (CTDYKGTNSTNNATSTVVSPAEIKN) are V1. The tract at residues 155-198 (CSFNITTEIKDKKKKESALFYRLDVLPLNGEGNNSSTEYRLINC) is V2. The tract at residues 298–331 (CTRPNNNTRKSIHMGPGKAFYTTGDIIGDIRQAH) is V3. C298 and C332 are disulfide-bonded. The segment at 364–375 (PNPGGDPEILTH) is CD4-binding loop. Intrachain disulfides connect C379–C432 and C386–C405. Residues 386–405 (CNTTKLFNETGENGTITLPC) form a V4 region. N-linked (GlcNAc...) asparagine; by host glycosylation is found at N387, N393, N398, N431, N435, N447, and N451. Residues 448 to 457 (NTHNETFRPG) are V5. The tract at residues 498–518 (AVGLGAVFFGFLGAAGSTMGA) is fusion peptide. Residues 560–578 (KQLRARILAVERYLKDQQL) form an immunosuppression region. A disulfide bond links C584 and C590. N597, N602, N611, and N623 each carry an N-linked (GlcNAc...) asparagine; by host glycan. Positions 619 to 653 (KEIGNYSDTIYKLIEESQTQQEKNEQDLLALDKWA) form a coiled coil. The segment at 648–669 (ALDKWASLWNWFDITKWLWYIK) is MPER; binding to GalCer. Residues 671 to 691 (FIMIIGGLIGLRIAFAVLSVV) traverse the membrane as a helical segment. Over 692-842 (NRVRQGYSPL…IRQGLERALL (151 aa)) the chain is Cytoplasmic. The YXXL motif; contains endocytosis signal motif lies at 698–701 (YSPL). The S-palmitoyl cysteine; by host moiety is linked to residue C750. Positions 841 to 842 (LL) match the Di-leucine internalization motif motif.

This sequence belongs to the HIV-1 env protein family. In terms of assembly, the mature envelope protein (Env) consists of a homotrimer of non-covalently associated gp120-gp41 heterodimers. The resulting complex protrudes from the virus surface as a spike. There seems to be as few as 10 spikes on the average virion. Interacts with host CD4, CCR5 and CXCR4. Gp120 also interacts with the C-type lectins CD209/DC-SIGN and CLEC4M/DC-SIGNR (collectively referred to as DC-SIGN(R)). Gp120 and gp41 interact with GalCer. Gp120 interacts with host ITGA4/ITGB7 complex; on CD4+ T-cells, this interaction results in rapid activation of integrin ITGAL/LFA-1, which facilitates efficient cell-to-cell spreading of HIV-1. Gp120 interacts with cell-associated heparan sulfate; this interaction increases virus infectivity on permissive cells and may be involved in infection of CD4- cells. The mature envelope protein (Env) consists of a homotrimer of non-covalently associated gp120-gp41 heterodimers. The resulting complex protrudes from the virus surface as a spike. There seems to be as few as 10 spikes on the average virion. In terms of processing, highly glycosylated by host. The high number of glycan on the protein is reffered to as 'glycan shield' because it contributes to hide protein sequence from adaptive immune system. Palmitoylation of the transmembrane protein and of Env polyprotein (prior to its proteolytic cleavage) is essential for their association with host cell membrane lipid rafts. Palmitoylation is therefore required for envelope trafficking to classical lipid rafts, but not for viral replication. Post-translationally, specific enzymatic cleavages in vivo yield mature proteins. Envelope glycoproteins are synthesized as an inactive precursor that is heavily N-glycosylated and processed likely by host cell furin in the Golgi to yield the mature SU and TM proteins. The cleavage site between SU and TM requires the minimal sequence [KR]-X-[KR]-R. About 2 of the 9 disulfide bonds of gp41 are reduced by P4HB/PDI, following binding to CD4 receptor.

Its subcellular location is the virion membrane. The protein localises to the host cell membrane. It is found in the host endosome membrane. Oligomerizes in the host endoplasmic reticulum into predominantly trimers. In a second time, gp160 transits in the host Golgi, where glycosylation is completed. The precursor is then proteolytically cleaved in the trans-Golgi and thereby activated by cellular furin or furin-like proteases to produce gp120 and gp41. Functionally, attaches the virus to the host lymphoid cell by binding to the primary receptor CD4. This interaction induces a structural rearrangement creating a high affinity binding site for a chemokine coreceptor like CXCR4 and/or CCR5. Acts as a ligand for CD209/DC-SIGN and CLEC4M/DC-SIGNR, which are respectively found on dendritic cells (DCs), and on endothelial cells of liver sinusoids and lymph node sinuses. These interactions allow capture of viral particles at mucosal surfaces by these cells and subsequent transmission to permissive cells. HIV subverts the migration properties of dendritic cells to gain access to CD4+ T-cells in lymph nodes. Virus transmission to permissive T-cells occurs either in trans (without DCs infection, through viral capture and transmission), or in cis (following DCs productive infection, through the usual CD4-gp120 interaction), thereby inducing a robust infection. In trans infection, bound virions remain infectious over days and it is proposed that they are not degraded, but protected in non-lysosomal acidic organelles within the DCs close to the cell membrane thus contributing to the viral infectious potential during DCs' migration from the periphery to the lymphoid tissues. On arrival at lymphoid tissues, intact virions recycle back to DCs' cell surface allowing virus transmission to CD4+ T-cells. In terms of biological role, acts as a class I viral fusion protein. Under the current model, the protein has at least 3 conformational states: pre-fusion native state, pre-hairpin intermediate state, and post-fusion hairpin state. During fusion of viral and target intracellular membranes, the coiled coil regions (heptad repeats) assume a trimer-of-hairpins structure, positioning the fusion peptide in close proximity to the C-terminal region of the ectodomain. The formation of this structure appears to drive apposition and subsequent fusion of viral and target cell membranes. Complete fusion occurs in host cell endosomes and is dynamin-dependent, however some lipid transfer might occur at the plasma membrane. The virus undergoes clathrin-dependent internalization long before endosomal fusion, thus minimizing the surface exposure of conserved viral epitopes during fusion and reducing the efficacy of inhibitors targeting these epitopes. Membranes fusion leads to delivery of the nucleocapsid into the cytoplasm. This is Envelope glycoprotein gp160 from Homo sapiens (Human).